We begin with the raw amino-acid sequence, 759 residues long: MSKRLRSNDVCADCSGPDPSWASVNRGTLICDECCSVHRSLGRHISQVRHLKHTPWPPTLLQMVETLYSNGANSIWEHSLLDPASVMSGRRKANPQDKVHPNKAEFIRAKYQMLAFVHRLPCRDDDSVTAKDLSKQLHSSVRTGNLETCLRLLSLGAQANFFHPEKGSTPLHVASKAGQILQAELLAVYGADPGTHDSSGKTPVDYARQGGHRELAERLVEIQYELTDRLAFYLCGRKPDHKNGQHFIIPQMADSSLDLSELAKAAKKKLQSLSNHLFEELAMDVYDEVDRRETDAVWLATQNHSTLVTETTVVPFLPVNPEYSSTRNQGRQKLARFNAHEFATLVIDILSDAKRRQQGSPLSRSKDNVELILRTVSNQHSTESQDNDQPDYDSVASDEDTDVETRASRTNRQKSLDSDLSDGPVTVQEFMEVKHALVASEAKRQQLMKVNNNLSGELRIMQKKLQTLQSENSSLRRQATASACQVQTASDHKDTVSHSSLKRRPSARGSRPMSMYETGSGQKPYLPMGEANHPEESRTRLQPFPTHIGRSALVTSSSSLPSFPSTLSWSRDESTRRASRLEKQNSTPESDYDNTAYDPEPDDTVSGRKGRQRSMLWQGDGPLPDTAEPHAVPSPALPSTEDVIRKTEQITKNIQELLRAAQENKHDSYIPCSERIHAAVTEMAALFPKKPKSDTVRTSLRLLTASAYRLQSECRKALPGDSSLPTDVQLVTQQVIQCAYDIAKAAKQLVTITTKENSS.

The Arf-GAP domain maps to 1–124; it reads MSKRLRSNDV…AFVHRLPCRD (124 aa). The segment at 11–34 adopts a C4-type zinc-finger fold; the sequence is CADCSGPDPSWASVNRGTLICDEC. ANK repeat units lie at residues 132–161, 166–198, and 199–228; these read DLSK…QANF, KGST…THDS, and SGKT…ELTD. 2 disordered regions span residues 376–422 and 469–641; these read VSNQ…DLSD and QSEN…PSTE. Residues 385 to 402 are compositionally biased toward acidic residues; that stretch reads QDNDQPDYDSVASDEDTD. A coiled-coil region spans residues 451-478; it reads NNNLSGELRIMQKKLQTLQSENSSLRRQ. Over residues 469-489 the composition is skewed to polar residues; sequence QSENSSLRRQATASACQVQTA. Over residues 555–569 the composition is skewed to low complexity; the sequence is TSSSSLPSFPSTLSW. Residues 570–583 show a composition bias toward basic and acidic residues; that stretch reads SRDESTRRASRLEK.

May form heterooligomers with GIT1. Directly interacts with protein Piccolo/PCLO. Interacts with PPFIA1 and PPFIA2. Interacts with ARHGEF7. Identified in a complex with ARHGEF6 and BIN2. Interacts with PAK3. Interacts with PXN/paxillin. Interacts with TGFB1I1. Forms a complex with EFNB1 and GRB4/NCK2.

Functionally, GTPase-activating protein for ADP ribosylation factor family members, including ARF1. The protein is ARF GTPase-activating protein GIT2 (Git2) of Rattus norvegicus (Rat).